We begin with the raw amino-acid sequence, 256 residues long: Thiazole synthase (256 aa).

Lysine 96 (schiff-base intermediate with DXP) is an active-site residue. Residues glycine 157, 184-185, and 206-207 contribute to the 1-deoxy-D-xylulose 5-phosphate site; these read AG and NT.

The protein belongs to the ThiG family. As to quaternary structure, homotetramer. Forms heterodimers with either ThiH or ThiS.

The protein localises to the cytoplasm. It carries out the reaction [ThiS sulfur-carrier protein]-C-terminal-Gly-aminoethanethioate + 2-iminoacetate + 1-deoxy-D-xylulose 5-phosphate = [ThiS sulfur-carrier protein]-C-terminal Gly-Gly + 2-[(2R,5Z)-2-carboxy-4-methylthiazol-5(2H)-ylidene]ethyl phosphate + 2 H2O + H(+). It functions in the pathway cofactor biosynthesis; thiamine diphosphate biosynthesis. Its function is as follows. Catalyzes the rearrangement of 1-deoxy-D-xylulose 5-phosphate (DXP) to produce the thiazole phosphate moiety of thiamine. Sulfur is provided by the thiocarboxylate moiety of the carrier protein ThiS. In vitro, sulfur can be provided by H(2)S. The protein is Thiazole synthase of Brucella suis (strain ATCC 23445 / NCTC 10510).